The following is a 188-amino-acid chain: Elongation factor P (188 aa).

The protein belongs to the elongation factor P family.

It localises to the cytoplasm. Its pathway is protein biosynthesis; polypeptide chain elongation. Involved in peptide bond synthesis. Stimulates efficient translation and peptide-bond synthesis on native or reconstituted 70S ribosomes in vitro. Probably functions indirectly by altering the affinity of the ribosome for aminoacyl-tRNA, thus increasing their reactivity as acceptors for peptidyl transferase. The chain is Elongation factor P from Rickettsia canadensis (strain McKiel).